The following is a 355-amino-acid chain: UDP-3-O-acylglucosamine N-acyltransferase (355 aa).

Catalysis depends on His-248, which acts as the Proton acceptor.

This sequence belongs to the transferase hexapeptide repeat family. LpxD subfamily. Homotrimer.

The catalysed reaction is a UDP-3-O-[(3R)-3-hydroxyacyl]-alpha-D-glucosamine + a (3R)-hydroxyacyl-[ACP] = a UDP-2-N,3-O-bis[(3R)-3-hydroxyacyl]-alpha-D-glucosamine + holo-[ACP] + H(+). It functions in the pathway bacterial outer membrane biogenesis; LPS lipid A biosynthesis. Functionally, catalyzes the N-acylation of UDP-3-O-acylglucosamine using 3-hydroxyacyl-ACP as the acyl donor. Is involved in the biosynthesis of lipid A, a phosphorylated glycolipid that anchors the lipopolysaccharide to the outer membrane of the cell. The polypeptide is UDP-3-O-acylglucosamine N-acyltransferase (Syntrophobacter fumaroxidans (strain DSM 10017 / MPOB)).